The chain runs to 326 residues: Vitamin B12 import system permease protein BtuC (326 aa).

9 helical membrane-spanning segments follow: residues Trp15–Glu35, Leu61–Phe81, Pro88–Gly108, Leu112–Leu132, Leu146–Phe166, Gly184–Ile204, Gly240–Ile260, Val274–Ala294, and Glu302–Leu322.

Belongs to the binding-protein-dependent transport system permease family. FecCD subfamily. As to quaternary structure, the complex is composed of two ATP-binding proteins (BtuD), two transmembrane proteins (BtuC) and a solute-binding protein (BtuF).

Its subcellular location is the cell inner membrane. Part of the ABC transporter complex BtuCDF involved in vitamin B12 import. Involved in the translocation of the substrate across the membrane. This is Vitamin B12 import system permease protein BtuC from Escherichia coli O17:K52:H18 (strain UMN026 / ExPEC).